Consider the following 268-residue polypeptide: Hydroxyethylthiazole kinase (268 aa).

Substrate is bound at residue Met-45. Residues Arg-121 and Thr-167 each contribute to the ATP site. Gly-194 contacts substrate.

Belongs to the Thz kinase family. Requires Mg(2+) as cofactor.

It catalyses the reaction 5-(2-hydroxyethyl)-4-methylthiazole + ATP = 4-methyl-5-(2-phosphooxyethyl)-thiazole + ADP + H(+). It functions in the pathway cofactor biosynthesis; thiamine diphosphate biosynthesis; 4-methyl-5-(2-phosphoethyl)-thiazole from 5-(2-hydroxyethyl)-4-methylthiazole: step 1/1. In terms of biological role, catalyzes the phosphorylation of the hydroxyl group of 4-methyl-5-beta-hydroxyethylthiazole (THZ). The chain is Hydroxyethylthiazole kinase from Bacillus anthracis (strain A0248).